A 155-amino-acid polypeptide reads, in one-letter code: Fibroblast growth factor 2 (155 aa).

The propeptide occupies 1 to 9; the sequence is MAAGSITTL. The segment at 1-20 is disordered; sequence MAAGSITTLPALPEDGGSSA. Asn36 serves as a coordination point for heparin. The Cell attachment site; atypical signature appears at 46 to 48; sequence DGR. Residue Tyr82 is modified to Phosphotyrosine; by TEC. The short motif at 88-90 is the Cell attachment site; atypical element; the sequence is DGR. Residue Lys95 forms a Glycyl lysine isopeptide (Lys-Gly) (interchain with G-Cter in SUMO1) linkage. Residues 128–144 form a heparin-binding region; that stretch reads KRTGQYKLGPKTGPGQK.

The protein belongs to the heparin-binding growth factors family. Monomer. Homodimer. Interacts with FGFR1, FGFR2, FGFR3 and FGFR4. Affinity between fibroblast growth factors (FGFs) and their receptors is increased by heparan sulfate glycosaminoglycans that function as coreceptors. Interacts with CSPG4, FGFBP1 and TEC. Found in a complex with FGFBP1, FGF1 and FGF2. Interacts with FGFBP3. Interacts with integrin ITGAV:ITGB3; the interaction is required for FGF2 signaling. Interacts with SNORC (via the extracellular domain). Interacts with glypican GPC3. In terms of processing, phosphorylation at Tyr-82 regulates FGF2 unconventional secretion.

Its subcellular location is the secreted. It localises to the nucleus. Its function is as follows. Acts as a ligand for FGFR1, FGFR2, FGFR3 and FGFR4. Also acts as an integrin ligand which is required for FGF2 signaling. Binds to integrin ITGAV:ITGB3. Plays an important role in the regulation of cell survival, cell division, cell differentiation and cell migration. Functions as a potent mitogen in vitro. Can induce angiogenesis. Mediates phosphorylation of ERK1/2 and thereby promotes retinal lens fiber differentiation. The chain is Fibroblast growth factor 2 (FGF2) from Ovis aries (Sheep).